The chain runs to 319 residues: Acetyl-coenzyme A carboxylase carboxyl transferase subunit alpha (319 aa).

Residues 32 to 293 (NVDTEVRALE…KAVLLNELEA (262 aa)) enclose the CoA carboxyltransferase C-terminal domain.

It belongs to the AccA family. Acetyl-CoA carboxylase is a heterohexamer composed of biotin carboxyl carrier protein (AccB), biotin carboxylase (AccC) and two subunits each of ACCase subunit alpha (AccA) and ACCase subunit beta (AccD).

The protein resides in the cytoplasm. The catalysed reaction is N(6)-carboxybiotinyl-L-lysyl-[protein] + acetyl-CoA = N(6)-biotinyl-L-lysyl-[protein] + malonyl-CoA. It participates in lipid metabolism; malonyl-CoA biosynthesis; malonyl-CoA from acetyl-CoA: step 1/1. In terms of biological role, component of the acetyl coenzyme A carboxylase (ACC) complex. First, biotin carboxylase catalyzes the carboxylation of biotin on its carrier protein (BCCP) and then the CO(2) group is transferred by the carboxyltransferase to acetyl-CoA to form malonyl-CoA. The chain is Acetyl-coenzyme A carboxylase carboxyl transferase subunit alpha from Xylella fastidiosa (strain M12).